The following is a 486-amino-acid chain: MITTEIKRVKNHINGEWVESTGTEVEAVPNPATGKIIAYVPLSPKEDVEKAVEAAKAAYETWSKVPVPNRSRQLYKYLQLLQENKEELAKIITLENGKTLTDATGEVQRGIEAVELATSTPNLMMGQALPNIASGIDGSIWRYPIGVVAGITPFNFPMMIPLWMFPLAIACGNTFVLKTSERTPLLAERLVELFYEAGFPKGVLNLVQGGKDVVNSILENKDIQAVSFVGSEPVARYVYETGTKHGKRVQALAGAKNHAIVMPDCNLEKTVQGVIGSAFASSGERCMACSVVAVVDEIADEFIDVLVAETKKLKVGDGFHEDNYVGPLIRESHKERVLGYINSGVADGATLLVDGRKIKEEVGEGYFVGATIFDGVNQEMKIWQDEIFAPVLSIVRVKDLEEGIKLTNQSKFANGAVIYTSSGKHAQTFRDNIDAGMIGVNVNVPAPMAFFAFAGNKASFFGDLGTNGTDGVQFYTRKKVVTERWF.

Phenylalanine 154, lysine 178, glutamate 181, arginine 182, and serine 231 together coordinate NAD(+). Catalysis depends on cysteine 286, which acts as the Nucleophile. Residue glutamate 386 coordinates NAD(+).

It belongs to the aldehyde dehydrogenase family. IolA subfamily. Homotetramer.

It carries out the reaction 3-oxopropanoate + NAD(+) + CoA + H2O = hydrogencarbonate + acetyl-CoA + NADH + H(+). The catalysed reaction is 2-methyl-3-oxopropanoate + NAD(+) + CoA + H2O = propanoyl-CoA + hydrogencarbonate + NADH + H(+). It participates in polyol metabolism; myo-inositol degradation into acetyl-CoA; acetyl-CoA from myo-inositol: step 7/7. Catalyzes the oxidation of malonate semialdehyde (MSA) and methylmalonate semialdehyde (MMSA) into acetyl-CoA and propanoyl-CoA, respectively. Is involved in a myo-inositol catabolic pathway. Bicarbonate, and not CO2, is the end-product of the enzymatic reaction. The sequence is that of Malonate-semialdehyde dehydrogenase from Bacillus cereus (strain AH187).